The following is a 145-amino-acid chain: Aspartate 1-decarboxylase (145 aa).

Ser-26 serves as the catalytic Schiff-base intermediate with substrate; via pyruvic acid. Ser-26 is modified (pyruvic acid (Ser)). Position 58 (Thr-58) interacts with substrate. Tyr-59 acts as the Proton donor in catalysis. Substrate is bound at residue 74-76 (GGA).

This sequence belongs to the PanD family. As to quaternary structure, heterooctamer of four alpha and four beta subunits. Pyruvate serves as cofactor. In terms of processing, is synthesized initially as an inactive proenzyme, which is activated by self-cleavage at a specific serine bond to produce a beta-subunit with a hydroxyl group at its C-terminus and an alpha-subunit with a pyruvoyl group at its N-terminus.

The protein localises to the cytoplasm. The enzyme catalyses L-aspartate + H(+) = beta-alanine + CO2. It participates in cofactor biosynthesis; (R)-pantothenate biosynthesis; beta-alanine from L-aspartate: step 1/1. Its function is as follows. Catalyzes the pyruvoyl-dependent decarboxylation of aspartate to produce beta-alanine. The protein is Aspartate 1-decarboxylase of Synechocystis sp. (strain ATCC 27184 / PCC 6803 / Kazusa).